The following is a 618-amino-acid chain: Mitochondrial Rho GTPase 2 (618 aa).

Residues 1 to 591 lie on the Cytoplasmic side of the membrane; sequence MKRDVRILLL…LNAVELGAAS (591 aa). Residues 2–168 form the Miro 1 domain; that stretch reads KRDVRILLLG…FYYAQKAVLH (167 aa). Positions 16, 17, 18, and 19 each coordinate GTP. Position 18 (Thr18) interacts with Mg(2+). The Mg(2+) site is built by Pro35 and Asp57. GTP-binding residues include Ser59, Asn118, Lys119, Asp121, Ala149, and Lys150. EF-hand domains follow at residues 184-219 and 304-339; these read ACSR…CFGN and LGYQ…FPCM. 8 residues coordinate Ca(2+): Asp197, Asp199, Asn201, Glu208, Asp317, Asp319, Asp321, and Glu328. The 164-residue stretch at 416–579 folds into the Miro 2 domain; sequence RNVFLCKVLG…YTKLATAATF (164 aa). Residues Gly428, Gly430, Lys431, Ser432, and Ala433 each coordinate GTP. Position 432 (Ser432) interacts with Mg(2+). Position 474 (Glu474) interacts with Mg(2+). Residues Lys528, Asp530, and Cys559 each contribute to the GTP site. Residues 592 to 614 form a helical; Anchor for type IV membrane protein membrane-spanning segment; sequence FWLRVALGAAVTALVGFTLYRVL. At 615–618 the chain is on the mitochondrial intermembrane side; that stretch reads AKNK.

Belongs to the mitochondrial Rho GTPase family. In terms of assembly, homodimer.

The protein resides in the mitochondrion outer membrane. The enzyme catalyses GTP + H2O = GDP + phosphate + H(+). The catalysed reaction is ATP + H2O = ADP + phosphate + H(+). It carries out the reaction UTP + H2O = UDP + phosphate + H(+). Its function is as follows. Atypical mitochondrial nucleoside-triphosphatase (NTPase) involved in mitochondrial trafficking. Probably involved in control of anterograde transport of mitochondria and their subcellular distribution. Can hydrolyze GTP, ATP and UTP. The protein is Mitochondrial Rho GTPase 2 (RHOT2) of Gallus gallus (Chicken).